Here is a 349-residue protein sequence, read N- to C-terminus: Green-sensitive opsin-1 (349 aa).

Residues 1–36 lie on the Extracellular side of the membrane; the sequence is MNGTEGSNFYIPMSNRTGLVRSPYDYTQYYLAEPWK. 2 N-linked (GlcNAc...) asparagine glycosylation sites follow: asparagine 2 and asparagine 15. Residues 37–61 traverse the membrane as a helical segment; the sequence is FKALAFYMFLLIIFGFPINVLTLVV. Residues 62 to 73 are Cytoplasmic-facing; that stretch reads TAQHKKLRQPLN. The helical transmembrane segment at 74–99 threads the bilayer; sequence YILVNLAFAGTIMVIFGFTVSFYCSL. The Extracellular segment spans residues 100–113; it reads VGYMALGPLGCVME. Cysteines 110 and 187 form a disulfide. The helical transmembrane segment at 114–133 threads the bilayer; sequence GFFATLGGQVALWSLVVLAI. Residues 134–152 lie on the Cytoplasmic side of the membrane; it reads ERYIVVCKPMGSFKFSANH. The chain crosses the membrane as a helical span at residues 153-176; the sequence is AMAGIAFTWFMACSCAVPPLFGWS. Topologically, residues 177–202 are extracellular; that stretch reads RYLPEGMQTSCGPDYYTLNPEYNNES. Residue asparagine 200 is glycosylated (N-linked (GlcNAc...) asparagine). Residues 203–230 traverse the membrane as a helical segment; the sequence is YVMYMFSCHFCIPVTTIFFTYGSLVCTV. Over 231–252 the chain is Cytoplasmic; the sequence is KAAAAQQQESESTQKAEREVTR. The helical transmembrane segment at 253–276 threads the bilayer; the sequence is MVILMVLGFLFAWVPYASFAAWIF. Topologically, residues 277 to 284 are extracellular; sequence FNRGAAFS. A helical membrane pass occupies residues 285-309; that stretch reads AQAMAVPAFFSKTSAVFNPIIYVLL. Lysine 296 is subject to N6-(retinylidene)lysine. The Cytoplasmic portion of the chain corresponds to 310-349; sequence NKQFRSCMLNTLFCGKSPLGDDESSSVSTSKTEVSSVSPA. The disordered stretch occupies residues 328 to 349; the sequence is LGDDESSSVSTSKTEVSSVSPA. Low complexity predominate over residues 334–349; the sequence is SSVSTSKTEVSSVSPA.

This sequence belongs to the G-protein coupled receptor 1 family. Opsin subfamily. Post-translationally, phosphorylated on some or all of the serine and threonine residues present in the C-terminal region. In terms of tissue distribution, retinal double cone accessory photoreceptor cell outer segments.

Its subcellular location is the membrane. Its function is as follows. Visual pigments are the light-absorbing molecules that mediate vision. They consist of an apoprotein, opsin, covalently linked to cis-retinal. The protein is Green-sensitive opsin-1 (opn1mw1) of Danio rerio (Zebrafish).